The following is a 96-amino-acid chain: MRPYEIMVILDPTLDERTVAPSLETFLNVVRKDGGSVEKVDIWGRRRLAYEIAKHAEGIYVVIDLKAEPATVSELDRQLSLNESVLRTKVMRTDKH.

The protein belongs to the bacterial ribosomal protein bS6 family.

Functionally, binds together with bS18 to 16S ribosomal RNA. The protein is Small ribosomal subunit protein bS6 of Mycolicibacterium paratuberculosis (strain ATCC BAA-968 / K-10) (Mycobacterium paratuberculosis).